We begin with the raw amino-acid sequence, 531 residues long: Cytochrome c oxidase subunit 1 (531 aa).

A helical membrane pass occupies residues 18–38 (ILYLIYGMVSAMVATGMSVII). Glu-41 and Gly-46 together coordinate Ca(2+). 6 helical membrane-spanning segments follow: residues 59 to 79 (VLVT…ILIG), 103 to 123 (ISFW…LIET), 149 to 169 (AIFA…NFIV), 185 to 205 (PLFV…LPVL), 237 to 257 (LFYF…FGII), and 269 to 289 (IFGQ…GFLV). His-64 serves as a coordination point for Fe(II)-heme a. A Cu cation-binding site is contributed by His-243. Residues 243 to 247 (HPEVY) constitute a cross-link (1'-histidyl-3'-tyrosine (His-Tyr)). Tyr-247 lines the O2 pocket. Cu cation is bound by residues His-292 and His-293. Helical transmembrane passes span 312-332 (MVIA…LYGG) and 340-360 (MLFA…GVML). Positions 370 and 371 each coordinate Mg(2+). His-378 contributes to the heme a3 binding site. His-380 contributes to the Fe(II)-heme a binding site. 2 helical membrane-spanning segments follow: residues 385-405 (MGAL…MFGL) and 414-434 (VHYW…HFLG). Pro-443 contributes to the Ca(2+) binding site. A helical membrane pass occupies residues 458–478 (WGSIMSVISVLIGLYSVLVQL).

This sequence belongs to the heme-copper respiratory oxidase family. In terms of assembly, component of the cytochrome c oxidase (complex IV, CIV), a multisubunit enzyme composed of a catalytic core of 3 subunits and several supernumerary subunits. The complex exists as a monomer or a dimer and forms supercomplexes (SCs) in the inner mitochondrial membrane with ubiquinol-cytochrome c oxidoreductase (cytochrome b-c1 complex, complex III, CIII). Heme is required as a cofactor. The cofactor is Cu cation.

Its subcellular location is the mitochondrion inner membrane. The enzyme catalyses 4 Fe(II)-[cytochrome c] + O2 + 8 H(+)(in) = 4 Fe(III)-[cytochrome c] + 2 H2O + 4 H(+)(out). Its pathway is energy metabolism; oxidative phosphorylation. Its function is as follows. Component of the cytochrome c oxidase, the last enzyme in the mitochondrial electron transport chain which drives oxidative phosphorylation. The respiratory chain contains 3 multisubunit complexes succinate dehydrogenase (complex II, CII), ubiquinol-cytochrome c oxidoreductase (cytochrome b-c1 complex, complex III, CIII) and cytochrome c oxidase (complex IV, CIV), that cooperate to transfer electrons derived from NADH and succinate to molecular oxygen, creating an electrochemical gradient over the inner membrane that drives transmembrane transport and the ATP synthase. Cytochrome c oxidase is the component of the respiratory chain that catalyzes the reduction of oxygen to water. Electrons originating from reduced cytochrome c in the intermembrane space (IMS) are transferred via the dinuclear copper A center (CU(A)) of subunit 2 and heme A of subunit 1 to the active site in subunit 1, a binuclear center (BNC) formed by heme A3 and copper B (CU(B)). The BNC reduces molecular oxygen to 2 water molecules using 4 electrons from cytochrome c in the IMS and 4 protons from the mitochondrial matrix. The sequence is that of Cytochrome c oxidase subunit 1 (COX1) from Candida albicans (strain SC5314 / ATCC MYA-2876) (Yeast).